The primary structure comprises 164 residues: Phosphopantetheine adenylyltransferase (164 aa).

Ser-9 contributes to the substrate binding site. ATP-binding positions include 9 to 10 (SF) and His-17. Residues Lys-41, Val-78, and Arg-92 each contribute to the substrate site. ATP contacts are provided by residues 93-95 (GLR), Glu-103, and 128-134 (VRTITAT).

Belongs to the bacterial CoaD family. As to quaternary structure, homohexamer. Mg(2+) serves as cofactor.

It localises to the cytoplasm. It carries out the reaction (R)-4'-phosphopantetheine + ATP + H(+) = 3'-dephospho-CoA + diphosphate. It participates in cofactor biosynthesis; coenzyme A biosynthesis; CoA from (R)-pantothenate: step 4/5. Its function is as follows. Reversibly transfers an adenylyl group from ATP to 4'-phosphopantetheine, yielding dephospho-CoA (dPCoA) and pyrophosphate. This chain is Phosphopantetheine adenylyltransferase, found in Brucella anthropi (strain ATCC 49188 / DSM 6882 / CCUG 24695 / JCM 21032 / LMG 3331 / NBRC 15819 / NCTC 12168 / Alc 37) (Ochrobactrum anthropi).